We begin with the raw amino-acid sequence, 439 residues long: Coiled-coil domain-containing protein 166 (439 aa).

The interval 1–28 is disordered; sequence MAPKKKRGPSAGSQPGGAAAAGAEQPLS. The span at 9–23 shows a compositional bias: low complexity; it reads PSAGSQPGGAAAAGA. Coiled coils occupy residues 27–74 and 121–213; these read LSER…EENR and DGVR…VRAL. The disordered stretch occupies residues 276 to 439; the sequence is PGGPPLWERP…AAAEASPGRA (164 aa). Positions 338 to 365 are enriched in polar residues; it reads VLSSMDSRVPSLATSKVGSRMPSLTASR. Low complexity-rich tracts occupy residues 376–392 and 428–439; these read SLEG…RVSS and AEAAAEASPGRA.

The sequence is that of Coiled-coil domain-containing protein 166 (CCDC166) from Homo sapiens (Human).